Consider the following 2467-residue polypeptide: Polyprotein P1234 (2467 aa).

Residues 28 to 257 (EARQVTDNDH…EDRSLLRSWH (230 aa)) enclose the Alphavirus-like MT domain. The interval 242–261 (GSTIYTEDRSLLRSWHLPNV) is nsP1 membrane-binding. Cys417 carries S-palmitoyl cysteine; by host lipidation. The (+)RNA virus helicase ATP-binding domain occupies 688–839 (DLVDPPFHEF…HDICTEVYHK (152 aa)). A ribonucleoside 5'-triphosphate is bound at residue 719-726 (GVPGSGKS). The (+)RNA virus helicase C-terminal domain maps to 840-988 (SISRRCTQTV…LDDWQREHDA (149 aa)). A Peptidase C9 domain is found at 1001-1320 (DVFQNKVNVC…VVLDNIYQGS (320 aa)). The nucleolus localization signal stretch occupies residues 1002 to 1021 (VFQNKVNVCWAKALEPVLAT). Cys1010 acts as the For cysteine protease nsP2 activity in catalysis. The Nuclear export signal signature appears at 1054-1063 (TRFFGVDLDS). Residue His1079 is the For cysteine protease nsP2 activity of the active site. The short motif at 1177-1181 (PGKKV) is the Nuclear localization signal element. Positions 1328-1486 (APAYRVIRGD…RIIEAIHRKE (159 aa)) constitute a Macro domain. ADP-D-ribose contacts are provided by Asp1337, Asn1351, Gly1359, Gly1438, Ile1439, and Tyr1440. Positions 1588, 1590, 1613, and 1631 each coordinate Zn(2+). The disordered stretch occupies residues 1798–1833 (RPVPAPRRRPIPSPRSTASAPPVPKPRRTKYQQPPG). The segment at 1831–1847 (PPGVARAISEAELDEYI) is binding to host FXR family members. The RdRp catalytic domain occupies 2224-2339 (DPVLETDIAS…HGVVSDTLMA (116 aa)).

In terms of assembly, interacts with non-structural protein 3. Interacts with RNA-directed RNA polymerase nsP4. Interacts with protease nsP2. interacts with itself. As to quaternary structure, interacts with mRNA-capping enzyme nsP1. Interacts with host DDX1. Interacts with host DDX3. Interacts (via C-terminus) with host FXR1; this interaction inhibits the formation of host stress granules on viral mRNAs and the nsp3-FXR1 complexes bind viral RNAs and probably orchestrate the assembly of viral replication complexes. Interacts (via C-terminus) with host FXR2; this interaction inhibits the formation of host stress granules on viral mRNAs and the nsp3-FXR2 complexes bind viral RNAs and probably orchestrate the assembly of viral replication complexes. Interacts (via C-terminus) with host FMR1; this interaction inhibits the formation of host stress granules on viral mRNAs and the nsp3-FMR1 complexes bind viral RNAs and probably orchestrate the assembly of viral replication complexes. Interacts with mRNA-capping enzyme nsP1. Interacts with protease nsP2. interacts with itself. In terms of assembly, interacts with RNA-directed RNA polymerase nsP4. Interacts with mRNA-capping enzyme nsP1. Interacts with KPNA1/karyopherin-alpha1; this interaction probably allows the active transport of protease nsP2 into the host nucleus. The cofactor is Mg(2+). Mn(2+) serves as cofactor. Specific enzymatic cleavages in vivo yield mature proteins. The processing of the polyprotein is temporally regulated. In early stages (1.7 hpi), P1234 is first cleaved in trans through its nsP2 protease activity, releasing P123' and nsP4, which associate to form the early replication complex. At the same time, P1234 is also cut at the nsP1/nsP2 site early in infection but with lower efficiency. After replication of the viral minus-strand RNAs (4 hpi), the polyproteins are cut at the nsP1/nsP2 and nsP2/nsP3 sites very efficiently, preventing accumulation of P123' and P1234 and allowing the formation of the late replication complex. NsP3'/nsP4 site is not cleaved anymore and P34 is produced rather than nsP4. In terms of processing, specific enzymatic cleavages in vivo yield mature proteins. The processing of the polyprotein is temporally regulated. In early stages (1.7 hpi), P123 is cleaved at the nsP1/nsP2 site with low efficiency. After replication of the viral minus-strand RNAs (4 hpi), the polyproteins are cut at the nsP1/nsP2 and nsP2/nsP3 sites very efficiently, preventing accumulation of P123 and allowing the formation of the late replication complex. Post-translationally, specific enzymatic cleavages in vivo yield mature proteins. The processing of the polyprotein is temporally regulated. In early stages (1.7 hpi), P123' is cleaved at the nsP1/nsP2 site with low efficiency. After replication of the viral minus-strand RNAs (4 hpi), the polyproteins are cut at the nsP1/nsP2 and nsP2/nsP3 sites very efficiently, preventing accumulation of P123' and allowing the formation of the late replication complex. Palmitoylated by host palmitoyltransferases ZDHHC2 and ZDHHC19. In terms of processing, phosphorylated by host on serines and threonines. Post-translationally, ubiquitinated; targets the protein for rapid degradation via the ubiquitin system. Nsp4 is present in extremely low quantities due to low frequency of translation through the amber stop-codon and the degradation by the ubiquitin pathway.

It is found in the host cytoplasmic vesicle membrane. Its subcellular location is the host cell membrane. It localises to the host cell projection. The protein resides in the host filopodium. The protein localises to the host nucleus. It is found in the host cytoplasm. It catalyses the reaction GTP + S-adenosyl-L-methionine = N(7)-methyl-GTP + S-adenosyl-L-homocysteine. It carries out the reaction N(7)-methyl-GTP + L-histidyl-[protein] = N(tele)-(N(7)-methylguanosine 5'-phospho)-L-histidyl-[protein] + diphosphate. The catalysed reaction is N(tele)-(N(7)-methylguanosine 5'-phospho)-L-histidyl-[protein] + a 5'-end diphospho-(purine-ribonucleoside) in mRNA + H(+) = a 5'-end (N(7)-methyl 5'-triphosphoguanosine)-(purine-ribonucleoside) in mRNA + L-histidyl-[protein]. The enzyme catalyses a 5'-end triphospho-ribonucleoside in mRNA + H2O = a 5'-end diphospho-ribonucleoside in mRNA + phosphate + H(+). It catalyses the reaction a ribonucleoside 5'-triphosphate + H2O = a ribonucleoside 5'-diphosphate + phosphate + H(+). It carries out the reaction ATP + H2O = ADP + phosphate + H(+). The catalysed reaction is RNA(n) + a ribonucleoside 5'-triphosphate = RNA(n+1) + diphosphate. The enzyme catalyses 4-O-(ADP-D-ribosyl)-L-aspartyl-[protein] + H2O = L-aspartyl-[protein] + ADP-D-ribose + H(+). It catalyses the reaction 5-O-(ADP-D-ribosyl)-L-glutamyl-[protein] + H2O = L-glutamyl-[protein] + ADP-D-ribose + H(+). It carries out the reaction RNA(n) + ATP = RNA(n)-3'-adenine ribonucleotide + diphosphate. The catalysed reaction is ADP-alpha-D-ribose 1''-phosphate + H2O = ADP-D-ribose + phosphate. With respect to regulation, inhibited by sinefungin. Its function is as follows. Inactive precursor of the viral replicase, which is activated by cleavages carried out by the viral protease nsP2. In terms of biological role, the early replication complex formed by the polyprotein P123 and nsP4 synthesizes the minus-strand RNAs (antigenome). Polyprotein P123 is a short-lived polyprotein that accumulates during early stage of infection. As soon P123 is cleaved into mature proteins, the plus-strand RNAs synthesis begins. The early replication complex formed by the polyprotein P123' and nsP4 synthesizes minus-strand RNAs (antigenome). Polyprotein P123' is a short-lived polyprotein that accumulates during early stage of infection. As soon P123' is cleaved into mature proteins, the plus-strand RNAs synthesis begins. Functionally, cytoplasmic capping enzyme that catalyzes two virus-specific reactions: methyltransferase and nsP1 guanylyltransferase. mRNA-capping is necessary since all viral RNAs are synthesized in the cytoplasm, and host capping enzymes are restricted to the nucleus. The enzymatic reaction involves a covalent link between 7-methyl-GMP and nsP1, whereas eukaryotic capping enzymes form a covalent complex only with GMP. NsP1 capping consists in the following reactions: GTP is first methylated into 7-methyl-GMP and then is covalently linked to nsP1 to form the m7GMp-nsP1 complex from which 7-methyl-GMP complex is transferred to the mRNA to create the cap structure. NsP1 is also needed for the initiation of the minus-strand RNAs synthesis. Probably serves as a membrane anchor for the replication complex composed of nsP1-nsP4. Nsp1 is needed for the initiation of the minus-strand RNAs synthesis. Palmitoylated nsP1 is remodeling host cell cytoskeleton, and induces filopodium-like structure formation at the surface of the host cell. Its function is as follows. Multifunctional protein whose N-terminus is part of the RNA polymerase complex and displays NTPase, RNA triphosphatase and helicase activities. NTPase and RNA triphosphatase are involved in viral RNA capping and helicase keeps a check on the dsRNA replication intermediates. The C-terminus harbors a protease that specifically cleaves the polyproteins and releases the mature proteins. Required for the shutoff of minus-strand RNAs synthesis. Inhibits host translation to ensure maximal viral gene expression and evade host immune response. In terms of biological role, seems to be essential for minus-strand RNAs and subgenomic 26S mRNAs synthesis. Displays mono-ADP-ribosylhydrolase activity. ADP-ribosylation is a post-translational modification that controls various processes of the host cell and the virus probably needs to revert it for optimal viral replication. Binds proteins of FXR and G3BP families and sequesters them into the viral RNA replication complexes thereby inhibiting the formation of host stress granules on viral mRNAs. The nsp3-FXR and nsp3-G3BP complexes bind viral RNAs and probably orchestrate the assembly of viral replication complexes, thanks to the ability of G3BP and FXR family members to self-assemble and bind DNA. Seems to be essential for minus-strand RNAs and subgenomic 26S mRNAs synthesis. Displays mono-ADP-ribosylhydrolase activity. ADP-ribosylation is a post-translational modification that controls various processes of the host cell and the virus probably needs to revert it for optimal viral replication. Binds proteins of FXR and G3BP families and sequesters them into the viral RNA replication complexes thereby inhibiting the formation of host stress granules on viral mRNAs. The nsp3'-FXR and nsp3-G3BP complexes bind viral RNAs and probably orchestrate the assembly of viral replication complexes, thanks to the ability of G3BP and FXR family members to self-assemble and bind DNA. Functionally, RNA dependent RNA polymerase. Replicates genomic and antigenomic RNA by recognizing replications specific signals. The early replication complex formed by the polyprotein P123 and nsP4 synthesizes minus-strand RNAs. The late replication complex composed of fully processed nsP1-nsP4 is responsible for the production of genomic and subgenomic plus-strand RNAs. This is Polyprotein P1234 from Western equine encephalitis virus (WEEV).